The sequence spans 430 residues: MDRIRIVGGNELHGVIPISGAKNAALPLMIASLLTDDTLTLENVPHLADVEQLIRILGNHGADISVNGRRERQGESYARTVHFTSRNIVSTTAPYELVSKMRASFWVIGPLLAREGKARVSLPGGCAIGTRPVDLFIEGLAALGANIEIDGGYVNATAPAGGLIGARYVFPKVSVGATHVLMMAATLANGTTVLGNAAREPEVVDLAKCLNAMGAKISGQGTSTVTIEGVRSLSGARHRVLPDRIETGTYAMAVAMAGGDVILEDTEASLLDTALEAIRRAGAQISETNSGIRIVRNGAGIKPVDIVTDPFPGFPTDLQAQFMGLMTRSSGVSHITETIFENRFMHVQELARLGAKISLSGQTAKVEGVSRLKGAPVMATDLRASVSLVIAGLAAEGETMVSRVYHLDRGFERLEEKLTRCGAHVERVSD.

22–23 (KN) contacts phosphoenolpyruvate. A UDP-N-acetyl-alpha-D-glucosamine-binding site is contributed by Arg-102. The active-site Proton donor is the Cys-126. Cys-126 carries the post-translational modification 2-(S-cysteinyl)pyruvic acid O-phosphothioketal. Residues 131–135 (RPVDL), 172–175 (KVSV), Asp-317, and Ile-339 each bind UDP-N-acetyl-alpha-D-glucosamine.

The protein belongs to the EPSP synthase family. MurA subfamily.

Its subcellular location is the cytoplasm. It catalyses the reaction phosphoenolpyruvate + UDP-N-acetyl-alpha-D-glucosamine = UDP-N-acetyl-3-O-(1-carboxyvinyl)-alpha-D-glucosamine + phosphate. The protein operates within cell wall biogenesis; peptidoglycan biosynthesis. Its function is as follows. Cell wall formation. Adds enolpyruvyl to UDP-N-acetylglucosamine. The sequence is that of UDP-N-acetylglucosamine 1-carboxyvinyltransferase from Rhizobium meliloti (strain 1021) (Ensifer meliloti).